The following is a 207-amino-acid chain: Mediator of RNA polymerase II transcription subunit 21 (207 aa).

Residues 36–120 (IPPPDVPDAA…APDSPRTFAS (85 aa)) form a disordered region. A compositionally biased stretch (low complexity) spans 91–108 (GEGAQTPGPAAGAGADPN). The stretch at 146–194 (IDSSEAEQEKRIRELEGELRQVEEERELKMRELKRLRRTLENVLTAVET) forms a coiled coil.

Belongs to the Mediator complex subunit 21 family. As to quaternary structure, component of the Mediator complex.

It is found in the nucleus. In terms of biological role, component of the Mediator complex, a coactivator involved in the regulated transcription of nearly all RNA polymerase II-dependent genes. Mediator functions as a bridge to convey information from gene-specific regulatory proteins to the basal RNA polymerase II transcription machinery. Mediator is recruited to promoters by direct interactions with regulatory proteins and serves as a scaffold for the assembly of a functional preinitiation complex with RNA polymerase II and the general transcription factors. The chain is Mediator of RNA polymerase II transcription subunit 21 (srb7) from Aspergillus fumigatus (strain ATCC MYA-4609 / CBS 101355 / FGSC A1100 / Af293) (Neosartorya fumigata).